Consider the following 333-residue polypeptide: Glyceraldehyde-3-phosphate dehydrogenase 1 (333 aa).

Residues 12–13, Asp35, and Arg79 contribute to the NAD(+) site; that span reads RI. D-glyceraldehyde 3-phosphate-binding positions include 152-154, Thr183, Arg198, 211-212, and Arg234; these read SCT and SG. Cys153 (nucleophile) is an active-site residue. Asn314 contacts NAD(+).

This sequence belongs to the glyceraldehyde-3-phosphate dehydrogenase family. As to quaternary structure, homotetramer.

It is found in the cytoplasm. It catalyses the reaction D-glyceraldehyde 3-phosphate + phosphate + NAD(+) = (2R)-3-phospho-glyceroyl phosphate + NADH + H(+). Its pathway is carbohydrate degradation; glycolysis; pyruvate from D-glyceraldehyde 3-phosphate: step 1/5. Resistant to pentalenolactone (PL). In terms of biological role, catalyzes the oxidative phosphorylation of glyceraldehyde 3-phosphate (G3P) to 1,3-bisphosphoglycerate (BPG) using the cofactor NAD. The first reaction step involves the formation of a hemiacetal intermediate between G3P and a cysteine residue, and this hemiacetal intermediate is then oxidized to a thioester, with concomitant reduction of NAD to NADH. The reduced NADH is then exchanged with the second NAD, and the thioester is attacked by a nucleophilic inorganic phosphate to produce BPG. The chain is Glyceraldehyde-3-phosphate dehydrogenase 1 (gap1) from Streptomyces arenae.